The primary structure comprises 328 residues: Phosphate acyltransferase (328 aa).

Belongs to the PlsX family. As to quaternary structure, homodimer. Probably interacts with PlsY.

It localises to the cytoplasm. The enzyme catalyses a fatty acyl-[ACP] + phosphate = an acyl phosphate + holo-[ACP]. It participates in lipid metabolism; phospholipid metabolism. Functionally, catalyzes the reversible formation of acyl-phosphate (acyl-PO(4)) from acyl-[acyl-carrier-protein] (acyl-ACP). This enzyme utilizes acyl-ACP as fatty acyl donor, but not acyl-CoA. The chain is Phosphate acyltransferase from Campylobacter jejuni subsp. doylei (strain ATCC BAA-1458 / RM4099 / 269.97).